Reading from the N-terminus, the 261-residue chain is Monensin polyketide synthase putative ketoacyl reductase (261 aa).

10-34 is a binding site for NAD(+); that stretch reads LVTGATSGIGLATARLLAAQGHLVF. Residue S144 coordinates substrate. The active-site Proton acceptor is Y157.

This sequence belongs to the short-chain dehydrogenases/reductases (SDR) family.

The protein operates within antifungal biosynthesis; monensin biosynthesis. This Streptomyces virginiae (Streptomyces cinnamonensis) protein is Monensin polyketide synthase putative ketoacyl reductase.